A 119-amino-acid polypeptide reads, in one-letter code: V-type proton ATPase subunit F (119 aa).

It belongs to the V-ATPase F subunit family. In terms of assembly, V-ATPase is a heteromultimeric enzyme made up of two complexes: the ATP-hydrolytic V1 complex and the proton translocation V0 complex. The V1 complex consists of three catalytic AB heterodimers that form a heterohexamer, three peripheral stalks each consisting of EG heterodimers, one central rotor including subunits D and F, and the regulatory subunits C and H. The proton translocation complex V0 consists of the proton transport subunit a, a ring of proteolipid subunits c9c'', rotary subunit d, subunits e and f, and the accessory subunits ATP6AP1/Ac45 and ATP6AP2/PRR. In terms of tissue distribution, expressed in brain (at protein level).

It localises to the cytoplasmic vesicle. The protein resides in the secretory vesicle. The protein localises to the synaptic vesicle membrane. It is found in the clathrin-coated vesicle membrane. Functionally, subunit of the V1 complex of vacuolar(H+)-ATPase (V-ATPase), a multisubunit enzyme composed of a peripheral complex (V1) that hydrolyzes ATP and a membrane integral complex (V0) that translocates protons. V-ATPase is responsible for acidifying and maintaining the pH of intracellular compartments and in some cell types, is targeted to the plasma membrane, where it is responsible for acidifying the extracellular environment. The sequence is that of V-type proton ATPase subunit F (ATP6V1F) from Bos taurus (Bovine).